Here is a 97-residue protein sequence, read N- to C-terminus: Prophage lipoprotein Bor homolog (97 aa).

An N-terminal signal peptide occupies residues 1-16 (MKKMLLATALALLITG). Residue cysteine 17 is the site of N-palmitoyl cysteine attachment. A lipid anchor (S-diacylglycerol cysteine) is attached at cysteine 17.

The protein belongs to the lambda phage bor family.

The protein localises to the cell membrane. The protein is Prophage lipoprotein Bor homolog (borD) of Escherichia coli (strain K12).